An 885-amino-acid polypeptide reads, in one-letter code: Chromatin assembly factor 1 subunit A-B (885 aa).

Disordered regions lie at residues methionine 1–glutamine 24, glutamate 115–cysteine 157, leucine 176–lysine 361, and valine 536–lysine 605. Low complexity predominate over residues lysine 12–lysine 21. Composition is skewed to polar residues over residues aspartate 116–asparagine 128, glutamine 134–cysteine 157, and serine 182–serine 193. 2 stretches are compositionally biased toward low complexity: residues valine 211 to valine 227 and serine 237 to threonine 254. A coiled-coil region spans residues serine 251 to lysine 376. Residues serine 255 to lysine 361 show a composition bias toward basic and acidic residues. Acidic residues-rich tracts occupy residues valine 536 to glycine 548 and glutamate 557 to glycine 573. The tract at residues cysteine 629–serine 665 is necessary for homodimerization, competence for chromatin assembly.

The protein belongs to the CHAF1A family. As to quaternary structure, homodimer.

The protein resides in the nucleus. In terms of biological role, involved in chromatin assembly in DNA replication and DNA repair. The chain is Chromatin assembly factor 1 subunit A-B (chaf1a-b) from Xenopus laevis (African clawed frog).